Consider the following 249-residue polypeptide: Early E1A protein (249 aa).

Residues 38 to 46 (MSLHDLFDV) form an interaction with RB1 in competition with E2F1 region. The interaction with UBE2I stretch occupies residues 74–131 (SAAESGSGDSGVGEELLPVDLDLKCYEDGLPPSDPETDEATEAEEEAAMPTYVNENEN). The LXCXE motif, interaction with host RB1 and TMEM173/STING signature appears at 96–100 (LKCYE). The segment at 145-165 (CRACDFHRGTSGNPEAMCALC) is a zinc-finger region. The interval 180-203 (DAEGESESGSPEDTDFPHPLTATP) is disordered. Over residues 181–193 (AEGESESGSPEDT) the composition is skewed to acidic residues. The short motif at 238–242 (PLNLS) is the PXDLS motif, CTBP-binding element. A Nuclear localization signal motif is present at residues 244–248 (KRPKC).

The protein belongs to the adenoviridae E1A protein family. In terms of assembly, interacts with host UBE2I; this interaction interferes with polySUMOylation. Interacts with host RB1; this interaction induces the aberrant dissociation of RB1-E2F1 complex thereby disrupting the activity of RB1 and activating E2F1-regulated genes. Interacts with host ATF7; the interaction enhances ATF7-mediated viral transactivation activity which requires the zinc binding domains of both proteins. Isoform early E1A 32 kDa protein and isoform early E1A 26 kDa protein interact (via N-terminus) with CUL1 and E3 ubiquitin ligase RBX1; these interactions inhibit RBX1-CUL1-dependent elongation reaction of ubiquitin chains and attenuate ubiquitination of SCF(FBXW7) target proteins. Interacts (via PXLXP motif) with host ZMYND11/BS69 (via MYND-type zinc finger); this interaction inhibits E1A mediated transactivation. Interacts with host EP300; this interaction stimulates the acetylation of RB1 by recruiting EP300 and RB1 into a multimeric-protein complex. Interacts with host CTBP1 and CTBP2; this interaction seems to potentiate viral replication. Interacts with host DCAF7. Interacts with host DYRK1A. Interacts with host KPNA4; this interaction allows E1A import into the host nucleus. Interacts with host EP400; this interaction stabilizes MYC. Interacts with host TBP protein; this interaction probably disrupts the TBP-TATA complex. Interacts (via LXCXE motif) with host TMEM173/STING; this interaction impairs the ability of TMEM173/STING to sense cytosolic DNA and promote the production of type I interferon (IFN-alpha and IFN-beta). Interacts (via C-terminus) with host ZBED1/hDREF (via C-terminus); the interaction is direct.

It localises to the host nucleus. Functionally, plays a role in viral genome replication by driving entry of quiescent cells into the cell cycle. Stimulation of progression from G1 to S phase allows the virus to efficiently use the cellular DNA replicating machinery to achieve viral genome replication. E1A protein has both transforming and trans-activating activities. Induces the disassembly of the E2F1 transcription factor from RB1 by direct competition for the same binding site on RB1, with subsequent transcriptional activation of E2F1-regulated S-phase genes and of the E2 region of the adenoviral genome. Release of E2F1 leads to the ARF-mediated inhibition of MDM2 and causes TP53/p53 to accumulate because it is not targeted for degradation by MDM2-mediated ubiquitination anymore. This increase in TP53, in turn, would arrest the cell proliferation and direct its death but this effect is counteracted by the viral protein E1B-55K. Inactivation of the ability of RB1 to arrest the cell cycle is critical for cellular transformation, uncontrolled cellular growth and proliferation induced by viral infection. Interaction with RBX1 and CUL1 inhibits ubiquitination of the proteins targeted by SCF(FBXW7) ubiquitin ligase complex, and may be linked to unregulated host cell proliferation. The tumorigenesis-restraining activity of E1A may be related to the disruption of the host CtBP-CtIP complex through the CtBP binding motif. Interaction with host TMEM173/STING impairs the ability of TMEM173/STING to sense cytosolic DNA and promote the production of type I interferon (IFN-alpha and IFN-beta). Promotes the sumoylation of host ZBED1/hDREF with SUMO1. In Homo sapiens (Human), this protein is Early E1A protein.